Reading from the N-terminus, the 25-residue chain is Small ribosomal subunit protein eS32 (25 aa).

The disordered stretch occupies residues 1-25; sequence MRAKWRKKRMRRLKRKRRKMRQRSK.

The protein belongs to the eukaryotic ribosomal protein eS32 family. As to quaternary structure, component of the large ribosomal subunit.

The protein resides in the cytoplasm. Component of the small ribosomal subunit. The ribosome is a large ribonucleoprotein complex responsible for the synthesis of proteins in the cell. This is Small ribosomal subunit protein eS32 (rpl41) from Cyprinus carpio (Common carp).